The primary structure comprises 248 residues: Aspartate/glutamate leucyltransferase (248 aa).

This sequence belongs to the R-transferase family. Bpt subfamily.

It localises to the cytoplasm. The catalysed reaction is N-terminal L-glutamyl-[protein] + L-leucyl-tRNA(Leu) = N-terminal L-leucyl-L-glutamyl-[protein] + tRNA(Leu) + H(+). It catalyses the reaction N-terminal L-aspartyl-[protein] + L-leucyl-tRNA(Leu) = N-terminal L-leucyl-L-aspartyl-[protein] + tRNA(Leu) + H(+). In terms of biological role, functions in the N-end rule pathway of protein degradation where it conjugates Leu from its aminoacyl-tRNA to the N-termini of proteins containing an N-terminal aspartate or glutamate. This Polynucleobacter asymbioticus (strain DSM 18221 / CIP 109841 / QLW-P1DMWA-1) (Polynucleobacter necessarius subsp. asymbioticus) protein is Aspartate/glutamate leucyltransferase.